The chain runs to 951 residues: 2-oxoglutarate dehydrogenase E1 component (951 aa).

The disordered stretch occupies residues 906–925; it reads RRRRSSPAEGNPTAHKQEQA.

This sequence belongs to the alpha-ketoglutarate dehydrogenase family. As to quaternary structure, homodimer. Part of the 2-oxoglutarate dehydrogenase (OGDH) complex composed of E1 (2-oxoglutarate dehydrogenase), E2 (dihydrolipoamide succinyltransferase) and E3 (dihydrolipoamide dehydrogenase); the complex contains multiple copies of the three enzymatic components (E1, E2 and E3). It depends on thiamine diphosphate as a cofactor.

It catalyses the reaction N(6)-[(R)-lipoyl]-L-lysyl-[protein] + 2-oxoglutarate + H(+) = N(6)-[(R)-S(8)-succinyldihydrolipoyl]-L-lysyl-[protein] + CO2. In terms of biological role, E1 component of the 2-oxoglutarate dehydrogenase (OGDH) complex which catalyzes the decarboxylation of 2-oxoglutarate, the first step in the conversion of 2-oxoglutarate to succinyl-CoA and CO(2). In Exiguobacterium sp. (strain ATCC BAA-1283 / AT1b), this protein is 2-oxoglutarate dehydrogenase E1 component.